The sequence spans 1076 residues: DNA-directed RNA polymerase subunit beta (1076 aa).

This sequence belongs to the RNA polymerase beta chain family. In terms of assembly, in plastids the minimal PEP RNA polymerase catalytic core is composed of four subunits: alpha, beta, beta', and beta''. When a (nuclear-encoded) sigma factor is associated with the core the holoenzyme is formed, which can initiate transcription.

It is found in the plastid. Its subcellular location is the chloroplast. It carries out the reaction RNA(n) + a ribonucleoside 5'-triphosphate = RNA(n+1) + diphosphate. Functionally, DNA-dependent RNA polymerase catalyzes the transcription of DNA into RNA using the four ribonucleoside triphosphates as substrates. This chain is DNA-directed RNA polymerase subunit beta, found in Agrostis stolonifera (Creeping bentgrass).